Reading from the N-terminus, the 165-residue chain is Protein SprT (165 aa).

A SprT-like domain is found at 20–163 (EKLAQANLKL…RCVHCGEQLV (144 aa)). His-78 is a binding site for Zn(2+). Glu-79 is an active-site residue. His-82 contacts Zn(2+).

The protein belongs to the SprT family. The cofactor is Zn(2+).

It is found in the cytoplasm. This is Protein SprT from Shigella sonnei (strain Ss046).